A 764-amino-acid polypeptide reads, in one-letter code: 5-methyltetrahydropteroyltriglutamate--homocysteine methyltransferase (764 aa).

Residues Arg-19–Lys-22 and Lys-113 contribute to the 5-methyltetrahydropteroyltri-L-glutamate site. Residues Ile-435–Ser-437 and Glu-488 each bind L-homocysteine. Residues Ile-435–Ser-437 and Glu-488 contribute to the L-methionine site. Residues Arg-519–Cys-520 and Trp-565 each bind 5-methyltetrahydropteroyltri-L-glutamate. Asp-603 is an L-homocysteine binding site. Asp-603 is a binding site for L-methionine. Glu-609 is a binding site for 5-methyltetrahydropteroyltri-L-glutamate. Residues His-645, Cys-647, and Glu-669 each coordinate Zn(2+). The active-site Proton donor is the His-698. Zn(2+) is bound at residue Cys-730.

Belongs to the vitamin-B12 independent methionine synthase family. Zn(2+) serves as cofactor.

It catalyses the reaction 5-methyltetrahydropteroyltri-L-glutamate + L-homocysteine = tetrahydropteroyltri-L-glutamate + L-methionine. It functions in the pathway amino-acid biosynthesis; L-methionine biosynthesis via de novo pathway; L-methionine from L-homocysteine (MetE route): step 1/1. Catalyzes the transfer of a methyl group from 5-methyltetrahydrofolate to homocysteine resulting in methionine formation. The sequence is that of 5-methyltetrahydropteroyltriglutamate--homocysteine methyltransferase from Desulforamulus reducens (strain ATCC BAA-1160 / DSM 100696 / MI-1) (Desulfotomaculum reducens).